The following is a 177-amino-acid chain: ATP synthase subunit delta (177 aa).

It belongs to the ATPase delta chain family. As to quaternary structure, F-type ATPases have 2 components, F(1) - the catalytic core - and F(0) - the membrane proton channel. F(1) has five subunits: alpha(3), beta(3), gamma(1), delta(1), epsilon(1). F(0) has three main subunits: a(1), b(2) and c(10-14). The alpha and beta chains form an alternating ring which encloses part of the gamma chain. F(1) is attached to F(0) by a central stalk formed by the gamma and epsilon chains, while a peripheral stalk is formed by the delta and b chains.

The protein localises to the cell inner membrane. Its function is as follows. F(1)F(0) ATP synthase produces ATP from ADP in the presence of a proton or sodium gradient. F-type ATPases consist of two structural domains, F(1) containing the extramembraneous catalytic core and F(0) containing the membrane proton channel, linked together by a central stalk and a peripheral stalk. During catalysis, ATP synthesis in the catalytic domain of F(1) is coupled via a rotary mechanism of the central stalk subunits to proton translocation. This protein is part of the stalk that links CF(0) to CF(1). It either transmits conformational changes from CF(0) to CF(1) or is implicated in proton conduction. In Serratia proteamaculans (strain 568), this protein is ATP synthase subunit delta.